Consider the following 141-residue polypeptide: Large ribosomal subunit protein uL14 (141 aa).

The protein belongs to the universal ribosomal protein uL14 family. In terms of assembly, part of the 50S ribosomal subunit. Forms a cluster with proteins L3 and L24e, part of which may contact the 16S rRNA in 2 intersubunit bridges.

Its function is as follows. Binds to 23S rRNA. Forms part of two intersubunit bridges in the 70S ribosome. The sequence is that of Large ribosomal subunit protein uL14 from Pyrococcus horikoshii (strain ATCC 700860 / DSM 12428 / JCM 9974 / NBRC 100139 / OT-3).